The primary structure comprises 592 residues: Monocopper oxidase-like protein SKS2 (592 aa).

The first 23 residues, 1–23 (MAATDFFFAFVFSFALIFGFSFA), serve as a signal peptide directing secretion. Asn-61, Asn-110, Asn-172, Asn-203, Asn-259, Asn-280, Asn-295, Asn-344, Asn-364, Asn-433, and Asn-447 each carry an N-linked (GlcNAc...) asparagine glycan. Position 455 (His-455) interacts with Cu cation. N-linked (GlcNAc...) asparagine glycans are attached at residues Asn-476 and Asn-536. A lipid anchor (GPI-anchor amidated serine) is attached at Ser-564. Residues 565–592 (ATKSMTNGQLILIFSMMMVLLSSFSSFC) constitute a propeptide, removed in mature form.

It belongs to the multicopper oxidase family. The cofactor is Cu cation.

The protein resides in the cell membrane. The sequence is that of Monocopper oxidase-like protein SKS2 (SKS2) from Arabidopsis thaliana (Mouse-ear cress).